A 486-amino-acid chain; its full sequence is MNYFPIFANLAGRPVLVVGGGAVAARKISLLLKAGAEVRVAAKHLNAELSALAAENKILWLAEEFRAEHIRTVFLIIAASSDQALNRRVFHLAESCQKPVNVVDDRDHCSFIFPSVIDRNPVQIAVSSSGSAPVLARLLRERLEALLPPSLGDMAEISGRWRDAVKGKLKSVTERRRFWEKQFNGRFAALVKNRQNTLAERELAGQLEQSRQNDQGGSVSLVGAGPGDAGLLTLKGLQEIQQADVVLYDALVSDGILSLVRRDAERIFVGKRARGGRTPQEDTNALMVRLAREGRRVVRLKGGDPFVFGRGGEELETLARHQIPFSVVPGITAAVGATAYAGIPLTHRDYAQSAVFVTGHRKADAPDIEWQTLARSRQTLVIYMGALKAALIAERLQQHGRSPDTPAAVISQGTLPAQKTATGTLANLAELAETAPNPALIVIGEVVGLHEKLAWFGENAKKESNPAEHAYFALDGLGTGQEQQAA.

A precorrin-2 dehydrogenase /sirohydrochlorin ferrochelatase region spans residues 1 to 203; sequence MNYFPIFANL…RQNTLAEREL (203 aa). NAD(+) is bound by residues 22-23 and 43-44; these read AV and KH. Position 128 is a phosphoserine (S128). The tract at residues 217-486 is uroporphyrinogen-III C-methyltransferase; sequence GSVSLVGAGP…LGTGQEQQAA (270 aa). P226 is a binding site for S-adenosyl-L-methionine. D249 (proton acceptor) is an active-site residue. The active-site Proton donor is K271. S-adenosyl-L-methionine is bound by residues 302 to 304, V307, 332 to 333, M384, and G413; these read GGD and TA.

The protein in the N-terminal section; belongs to the precorrin-2 dehydrogenase / sirohydrochlorin ferrochelatase family. It in the C-terminal section; belongs to the precorrin methyltransferase family.

The catalysed reaction is uroporphyrinogen III + 2 S-adenosyl-L-methionine = precorrin-2 + 2 S-adenosyl-L-homocysteine + H(+). The enzyme catalyses precorrin-2 + NAD(+) = sirohydrochlorin + NADH + 2 H(+). It catalyses the reaction siroheme + 2 H(+) = sirohydrochlorin + Fe(2+). It functions in the pathway cofactor biosynthesis; adenosylcobalamin biosynthesis; precorrin-2 from uroporphyrinogen III: step 1/1. It participates in cofactor biosynthesis; adenosylcobalamin biosynthesis; sirohydrochlorin from precorrin-2: step 1/1. Its pathway is porphyrin-containing compound metabolism; siroheme biosynthesis; precorrin-2 from uroporphyrinogen III: step 1/1. The protein operates within porphyrin-containing compound metabolism; siroheme biosynthesis; siroheme from sirohydrochlorin: step 1/1. It functions in the pathway porphyrin-containing compound metabolism; siroheme biosynthesis; sirohydrochlorin from precorrin-2: step 1/1. In terms of biological role, multifunctional enzyme that catalyzes the SAM-dependent methylations of uroporphyrinogen III at position C-2 and C-7 to form precorrin-2 via precorrin-1. Then it catalyzes the NAD-dependent ring dehydrogenation of precorrin-2 to yield sirohydrochlorin. Finally, it catalyzes the ferrochelation of sirohydrochlorin to yield siroheme. The sequence is that of Siroheme synthase from Neisseria meningitidis serogroup A / serotype 4A (strain DSM 15465 / Z2491).